Reading from the N-terminus, the 271-residue chain is Putative phosphoenolpyruvate synthase regulatory protein (271 aa).

151–158 (GVSRSGKT) is an ADP binding site.

Belongs to the pyruvate, phosphate/water dikinase regulatory protein family. PSRP subfamily.

The catalysed reaction is [pyruvate, water dikinase] + ADP = [pyruvate, water dikinase]-phosphate + AMP + H(+). It carries out the reaction [pyruvate, water dikinase]-phosphate + phosphate + H(+) = [pyruvate, water dikinase] + diphosphate. Bifunctional serine/threonine kinase and phosphorylase involved in the regulation of the phosphoenolpyruvate synthase (PEPS) by catalyzing its phosphorylation/dephosphorylation. The polypeptide is Putative phosphoenolpyruvate synthase regulatory protein (Burkholderia thailandensis (strain ATCC 700388 / DSM 13276 / CCUG 48851 / CIP 106301 / E264)).